The sequence spans 279 residues: DegV domain-containing protein SpyM3_1149 (279 aa).

The 275-residue stretch at 4-278 folds into the DegV domain; the sequence is IKIVTDSSIT…EGAFAVMVRY (275 aa). Hexadecanoate-binding residues include T62 and S95.

In terms of biological role, may bind long-chain fatty acids, such as palmitate, and may play a role in lipid transport or fatty acid metabolism. The protein is DegV domain-containing protein SpyM3_1149 of Streptococcus pyogenes serotype M3 (strain ATCC BAA-595 / MGAS315).